Reading from the N-terminus, the 371-residue chain is Putative glutamate--cysteine ligase 2 (371 aa).

Belongs to the glutamate--cysteine ligase type 2 family. YbdK subfamily.

It carries out the reaction L-cysteine + L-glutamate + ATP = gamma-L-glutamyl-L-cysteine + ADP + phosphate + H(+). Its function is as follows. ATP-dependent carboxylate-amine ligase which exhibits weak glutamate--cysteine ligase activity. The protein is Putative glutamate--cysteine ligase 2 of Burkholderia thailandensis (strain ATCC 700388 / DSM 13276 / CCUG 48851 / CIP 106301 / E264).